The primary structure comprises 254 residues: Cytochrome c oxidase subunit 2 (254 aa).

Residues 1–37 (MNNILNFYPAVITTDVAENWQIGFQDPATPIMEGIIN) are Mitochondrial intermembrane-facing. A helical transmembrane segment spans residues 38–58 (LHYDLMFFICVISVFVSWMLG). Topologically, residues 59 to 83 (RTLWHFEQNQNKIPSSLTHGTLIEM) are mitochondrial matrix. The helical transmembrane segment at 84–104 (IWTVTPAFILLIIAVPSFSLL) threads the bilayer. Topologically, residues 105–254 (YAMDEIISPA…VSWISNKLNE (150 aa)) are mitochondrial intermembrane. Cu cation contacts are provided by H186, C221, E223, C225, H229, and M232. E223 is a binding site for Mg(2+).

Belongs to the cytochrome c oxidase subunit 2 family. In terms of assembly, component of the cytochrome c oxidase (complex IV, CIV), a multisubunit enzyme composed of a catalytic core of 3 subunits and several supernumerary subunits. The complex exists as a monomer or a dimer and forms supercomplexes (SCs) in the inner mitochondrial membrane with ubiquinol-cytochrome c oxidoreductase (cytochrome b-c1 complex, complex III, CIII). The cofactor is Cu cation.

It localises to the mitochondrion inner membrane. It catalyses the reaction 4 Fe(II)-[cytochrome c] + O2 + 8 H(+)(in) = 4 Fe(III)-[cytochrome c] + 2 H2O + 4 H(+)(out). Component of the cytochrome c oxidase, the last enzyme in the mitochondrial electron transport chain which drives oxidative phosphorylation. The respiratory chain contains 3 multisubunit complexes succinate dehydrogenase (complex II, CII), ubiquinol-cytochrome c oxidoreductase (cytochrome b-c1 complex, complex III, CIII) and cytochrome c oxidase (complex IV, CIV), that cooperate to transfer electrons derived from NADH and succinate to molecular oxygen, creating an electrochemical gradient over the inner membrane that drives transmembrane transport and the ATP synthase. Cytochrome c oxidase is the component of the respiratory chain that catalyzes the reduction of oxygen to water. Electrons originating from reduced cytochrome c in the intermembrane space (IMS) are transferred via the dinuclear copper A center (CU(A)) of subunit 2 and heme A of subunit 1 to the active site in subunit 1, a binuclear center (BNC) formed by heme A3 and copper B (CU(B)). The BNC reduces molecular oxygen to 2 water molecules using 4 electrons from cytochrome c in the IMS and 4 protons from the mitochondrial matrix. The sequence is that of Cytochrome c oxidase subunit 2 (COX2) from Chondrus crispus (Carrageen Irish moss).